Consider the following 397-residue polypeptide: P2X purinoceptor 3 (397 aa).

Over 1-20 the chain is Cytoplasmic; it reads MNCISDFFTYETTKSVVVKS. Residues 21-43 form a helical membrane-spanning segment; it reads WTIGIINRAVQLLIISYFVGWVF. Residues 44 to 322 lie on the Extracellular side of the membrane; it reads LHEKAYQVRD…AGKFNIIPTI (279 aa). Residues lysine 63 and lysine 65 each coordinate ATP. Intrachain disulfides connect cysteine 107–cysteine 153, cysteine 116–cysteine 137, and cysteine 122–cysteine 147. Glutamate 111 contributes to the Mg(2+) binding site. An N-linked (GlcNAc...) asparagine glycan is attached at asparagine 139. Position 158 (aspartate 158) interacts with Mg(2+). A Ca(2+)-binding site is contributed by aspartate 158. Residue asparagine 170 is glycosylated (N-linked (GlcNAc...) asparagine). Threonine 172 contacts ATP. N-linked (GlcNAc...) asparagine glycosylation occurs at asparagine 194. 2 disulfide bridges follow: cysteine 203–cysteine 213 and cysteine 247–cysteine 256. ATP contacts are provided by serine 275, asparagine 279, and arginine 281. Asparagine 290 carries N-linked (GlcNAc...) asparagine glycosylation. An ATP-binding site is contributed by lysine 299. The chain crosses the membrane as a helical span at residues 323–341; that stretch reads ISSVAAFTSVGVGTVLCDI. The Cytoplasmic portion of the chain corresponds to 342 to 397; the sequence is ILLNFLKGADHYKARKFEEVTETTLKGTASTNPVFTSDQATVEKQSTDSGAYSIGH.

The protein belongs to the P2X receptor family. Homotrimer. Forms heterotrimer with P2RX2. Heterotrimeric P2RX2/3 has a ligand dose-response profile that is distinct from either homotrimeric P2RX2 or P2RX3.

Its subcellular location is the cell membrane. The catalysed reaction is Ca(2+)(in) = Ca(2+)(out). It carries out the reaction Na(+)(in) = Na(+)(out). Its activity is regulated as follows. Has high sensitivity to ATP. Fast activation by external ATP. Exhibits rapid desensitization. Sensitives to the ATP agonist:alpha/beta-methylene-ATP. Subject to allosteric inhibition by AF-219. Mg(2+) and Ca(2+) slow deactivation of P2RX3. Functionally, extracellular ATP-activated non-selective cation channel. Plays particularly important role in sensory neurons where its activation is critical for gustatory, nociceptive responses, visceral reflexes and sensory hypersensitization. The protein is P2X purinoceptor 3 (P2rx3) of Mus musculus (Mouse).